Here is a 2055-residue protein sequence, read N- to C-terminus: Multiple PDZ domain protein (2055 aa).

The region spanning 1–63 (MLETIDKNRA…SLQQLKDQVN (63 aa)) is the L27 domain. Positions 138–225 (IFELLKPPCG…TVQLVIARGS (88 aa)) constitute a PDZ 1 domain. At Ser-231 the chain carries Phosphoserine. One can recognise a PDZ 2 domain in the interval 258–338 (TIELVNDGSG…RVKLMIARGA (81 aa)). Residues 348 to 360 (LGITLSSSTSSTS) are compositionally biased toward low complexity. The tract at residues 348 to 372 (LGITLSSSTSSTSEMRVDASTQKND) is disordered. 3 PDZ domains span residues 378–464 (DVEL…MRKG), 546–627 (VAHV…CRRT), and 693–779 (SIEL…VAKP). Phosphoserine is present on residues Ser-783 and Ser-1066. In terms of domain architecture, PDZ 6 spans 996-1077 (TVTIAKGSSS…IGPDIKITYV (82 aa)). The segment at 1111 to 1130 (PELPEREEGEGEESELQNAA) is disordered. The PDZ 7 domain maps to 1139 to 1231 (RVELWREPSK…PVVFMVQSII (93 aa)). Residue Arg-1158 is modified to Omega-N-methylarginine. The span at 1264–1274 (LTTDQAPSQSE) shows a compositional bias: polar residues. Residues 1264–1299 (LTTDQAPSQSESETEKPALCNVPPSSPSVFSEMGSD) form a disordered region. The PDZ 8 domain maps to 1338–1421 (VIELEKGQSG…KVKIIFIRNA (84 aa)). Positions 1435–1445 (ADSPSSTSDSP) are enriched in low complexity. The disordered stretch occupies residues 1435-1459 (ADSPSSTSDSPQNKEVEPCSTTSAS). Residues 1471 to 1552 (QLELPKDQGG…TVKLTVRAEN (82 aa)) enclose the PDZ 9 domain. Positions 1557–1597 (AVPSSAVTVSGERKDNSQTPAVPAPDLEPIPSTSRSSTPAV) are disordered. 2 consecutive PDZ domains span residues 1614 to 1697 (TIEI…YRDE) and 1710 to 1792 (TIEL…GRVK). Residues 1795-1834 (PFHSERRPSQSSQVSESSLSSFTPPLSGINTSESLESNSK) are disordered. A phosphoserine mark is found at Ser-1803 and Ser-1809. The span at 1803-1815 (SQSSQVSESSLSS) shows a compositional bias: low complexity. Positions 1816-1834 (FTPPLSGINTSESLESNSK) are enriched in polar residues. 2 PDZ domains span residues 1847 to 1933 (TVEI…VAGG) and 1972 to 2055 (TITL…MVLS).

In terms of assembly, interacts with CLDN5, DLG4, GRIN1, SYNGAP1, CAMK2A and CAMK2B, HTR2A, HTR2B, HTR2C, PLEKHA1/TAPP1 and PLEKHA2/TAPP2. Interacts with F11R/JAM, CLDN1, NG2, CXADR, CRB1, MPP4 and PALS1. Interacts with FAT4 (via cytoplasmic domain). Interacts with DLL1. In terms of tissue distribution, in the brain, it is strongly expressed in the choroid plexus. Within the hippocampal formation, strongest expression was seen in the soma of CA1-4 pyramidal cells. Expressed in most neocortical regions with the strongest expression in piriform cortex and amygdaloid nuclei but also detected in the subiculum and olfactory bulb. In the cerebellum, the highest level of expression was found in Purkinje cells. Moderately expressed in the granular layer and molecular layer. Expressed in the pontine nuclei, parts of spinal trigeminal nuclei, and the principal sensory trigeminal nuclei of the metencephalon. Expressed in all thalamic and hypothalamic nuclei, and the substantia nigra (at protein level). Ubiquitously expressed.

The protein resides in the cell membrane. Its subcellular location is the apical cell membrane. The protein localises to the postsynaptic density. It is found in the cell projection. It localises to the dendrite. The protein resides in the cell junction. Its subcellular location is the tight junction. The protein localises to the synapse. It is found in the synaptosome. Functionally, member of the NMDAR signaling complex that may play a role in control of AMPAR potentiation and synaptic plasticity in excitatory synapses. Promotes clustering of HT2RC at the cell surface. In Mus musculus (Mouse), this protein is Multiple PDZ domain protein (Mpdz).